Here is a 100-residue protein sequence, read N- to C-terminus: Putative pterin-4-alpha-carbinolamine dehydratase (100 aa).

It belongs to the pterin-4-alpha-carbinolamine dehydratase family.

The enzyme catalyses (4aS,6R)-4a-hydroxy-L-erythro-5,6,7,8-tetrahydrobiopterin = (6R)-L-erythro-6,7-dihydrobiopterin + H2O. This is Putative pterin-4-alpha-carbinolamine dehydratase from Bradyrhizobium diazoefficiens (strain JCM 10833 / BCRC 13528 / IAM 13628 / NBRC 14792 / USDA 110).